A 177-amino-acid chain; its full sequence is Translation initiation factor IF-3 (177 aa).

The protein belongs to the IF-3 family. Monomer.

It is found in the cytoplasm. IF-3 binds to the 30S ribosomal subunit and shifts the equilibrium between 70S ribosomes and their 50S and 30S subunits in favor of the free subunits, thus enhancing the availability of 30S subunits on which protein synthesis initiation begins. The sequence is that of Translation initiation factor IF-3 from Rhizobium meliloti (strain 1021) (Ensifer meliloti).